Consider the following 414-residue polypeptide: Serine hydroxymethyltransferase (414 aa).

Residues Leu-121 and 125 to 127 each bind (6S)-5,6,7,8-tetrahydrofolate; that span reads GHL. Lys-229 carries the N6-(pyridoxal phosphate)lysine modification.

This sequence belongs to the SHMT family. As to quaternary structure, homodimer. Requires pyridoxal 5'-phosphate as cofactor.

The protein resides in the cytoplasm. It catalyses the reaction (6R)-5,10-methylene-5,6,7,8-tetrahydrofolate + glycine + H2O = (6S)-5,6,7,8-tetrahydrofolate + L-serine. The protein operates within one-carbon metabolism; tetrahydrofolate interconversion. It functions in the pathway amino-acid biosynthesis; glycine biosynthesis; glycine from L-serine: step 1/1. Functionally, catalyzes the reversible interconversion of serine and glycine with tetrahydrofolate (THF) serving as the one-carbon carrier. This reaction serves as the major source of one-carbon groups required for the biosynthesis of purines, thymidylate, methionine, and other important biomolecules. Also exhibits THF-independent aldolase activity toward beta-hydroxyamino acids, producing glycine and aldehydes, via a retro-aldol mechanism. This is Serine hydroxymethyltransferase from Polaromonas sp. (strain JS666 / ATCC BAA-500).